Here is a 210-residue protein sequence, read N- to C-terminus: Ras-related protein Rab-43 (210 aa).

23–30 (GDASVGKT) serves as a coordination point for GTP. The Effector region motif lies at 45–53 (QGSTIGVDF). Residue Ser-47 is modified to Phosphoserine. Residue 71-75 (DTAGQ) coordinates GTP. Residue Thr-80 is modified to Phosphothreonine. GTP-binding positions include 129–132 (NKSD) and 161–162 (AK). S-geranylgeranyl cysteine attachment occurs at residues Cys-208 and Cys-210. A Cysteine methyl ester modification is found at Cys-210.

Belongs to the small GTPase superfamily. Rab family. Interacts with GDI1, GDI2 and CHM; phosphorylation at Thr-80 disrupts these interactions.

Its subcellular location is the cytoplasmic vesicle. It is found in the phagosome. It localises to the phagosome membrane. The protein resides in the golgi apparatus. The protein localises to the trans-Golgi network membrane. Its subcellular location is the trans-Golgi network. Its function is as follows. The small GTPases Rab are key regulators of intracellular membrane trafficking, from the formation of transport vesicles to their fusion with membranes. Rabs cycle between an inactive GDP-bound form and an active GTP-bound form that is able to recruit to membranes different set of downstream effectors directly responsible for vesicle formation, movement, tethering and fusion. The low intrinsic GTPase activity of RAB43 is activated by USP6NL. Involved in retrograde transport from the endocytic pathway to the Golgi apparatus. Involved in the transport of Shiga toxin from early and recycling endosomes to the trans-Golgi network. Required for the structural integrity of the Golgi complex. Plays a role in the maturation of phagosomes that engulf pathogens, such as S.aureus and Mycobacterium. The sequence is that of Ras-related protein Rab-43 (Rab43) from Rattus norvegicus (Rat).